The chain runs to 559 residues: MTMLKDPSSKYRAFPTINLPDRTWPSKTITSAPIWCSSDLRDGNQSLIEPMDAVKKLRFWKTLVAVGVKEIEASFPAASQTDFDFVRTLIEGGHIPDDTTIQVLTQAREDLIARTFESLRGAKKAIVHLYNATSPSFRRIVFNQDKAGVKEIAVNAAKLFVKYAAQQPETQWQFEYSPETFSATELEFAKEVCDAVVEVWNATPSNKVILNLPATVEVATPNIYADQIEWFCRNINRRDSVLISLHTHNDRGTGVAATELGLMAGADRVEGCLFGNGERTGNVDLVTVALNLYTQGVNPELDFSDIDGVRKVVEECNQIAVHPRHPYVGDLVHTAFSGSHQDAIRKGFAQQKADGLWEVPYLPIDPADIGRSYEAVIRVNSQSGKGGIAYLLEQEYGISLPRRMQIEFSQVVQRETDRLGLEMTAQQIHALLHSEYLQANTPYALVSHRLQEENGHSAVEVEVSSKGQGETNLSWRGKGNGALEALVAGLPVPVEIMDYNEHAIGAGTNAKAAAYIELRVNGERAVHGVGIDENITTASFKALFSALNRSLSEQQAKAA.

Residues 33 to 307 form the Pyruvate carboxyltransferase domain; the sequence is PIWCSSDLRD…NPELDFSDID (275 aa). Mg(2+)-binding residues include Asp-42, His-246, His-248, and Asn-282. The interval 439-559 is regulatory domain; it reads ANTPYALVSH…SLSEQQAKAA (121 aa).

Belongs to the alpha-IPM synthase/homocitrate synthase family. LeuA type 2 subfamily. Homodimer. It depends on Mg(2+) as a cofactor.

It is found in the cytoplasm. It carries out the reaction 3-methyl-2-oxobutanoate + acetyl-CoA + H2O = (2S)-2-isopropylmalate + CoA + H(+). The protein operates within amino-acid biosynthesis; L-leucine biosynthesis; L-leucine from 3-methyl-2-oxobutanoate: step 1/4. Functionally, catalyzes the condensation of the acetyl group of acetyl-CoA with 3-methyl-2-oxobutanoate (2-ketoisovalerate) to form 3-carboxy-3-hydroxy-4-methylpentanoate (2-isopropylmalate). The polypeptide is 2-isopropylmalate synthase (Pseudomonas fluorescens (strain ATCC BAA-477 / NRRL B-23932 / Pf-5)).